A 180-amino-acid chain; its full sequence is Interleukin-17B (180 aa).

The signal sequence occupies residues 1–20 (MDWPHNLLFLLTISIFLGLG). The tract at residues 22 to 44 (PRSPKSKRKGQGRPGPLAPGPHQ) is disordered. N-linked (GlcNAc...) asparagine glycosylation occurs at Asn75. 2 cysteine pairs are disulfide-bonded: Cys121–Cys176 and Cys126–Cys178.

The protein belongs to the IL-17 family. Expressed in adult pancreas, small intestine, stomach, spinal cord and testis. Less pronounced expression in prostate, colon mucosal lining, and ovary.

It is found in the secreted. Functionally, stimulates the release of tumor necrosis factor alpha and IL-1-beta from the monocytic cell line THP-1. This chain is Interleukin-17B (IL17B), found in Homo sapiens (Human).